The primary structure comprises 854 residues: MKVMEKKKRDWNSLSIITIITIILLTPCLTSELWVTVYYGVPVWHDADPVLFCASDAKAHSTEAHNIWATQACVPTDPSPQEVFLPNVIESFNMWKNNMVDQMHEDIISLWDQSLKPCVKLTPLCVTLQCSKANFSQAKNLTNQTSSPPLEMKNCSFNVTTELRDKKKQVYSLFYVEDVVNLGNENNTYRIINCNTTAITQACPKTSFEPIPIHYCAPAGFAILKCNDKDFSGKGKCTNVSTVHCTHGIKPVVTTQLLINGSLAEGNITVRVENKSKNTDVWIVQLVEAVSLNCHRPGNNTRGEVQIGPGMTFYNIENVVGDTRSAYCKINGTTWNRTVEEVKKALATSSNRTAANITLNRASGGDPEVTHHMFNCGGEFFYCNTSQIFTDNITNGIIILPCRIRQIVSSWMRVGRGIYAPPIRGNITCNSNITGLLLTSDTPVTNNSGNLTFRPTGGNMKDIWRSELYKYKVVRIEPLSVAPTKARRHTVARQKDRQKRAAFGLGALFLGFLGAAGSTMGAAAVTLTVQARQLLSGIVQQQNNLLKAIEAQQHLLQLSIWGVKQLQARLLAVERYLQDQQILGLWGCSGKAVCYTTVPWNNSWPGSNSTDDIWGNLTWQQWDKLVSNYTGKIFGLLEEAQSQQEKNERDLLELDQWASLWNWFDITKWLWYIKIFLMAVGGIIGLRIIMTVFSVVRRVRQGYSPLSLQTLIPVQREQGRLGEIDEGGGEQDRSRSVRLVEGCLPLIWDDLRNLGIWSYQSLTSLACNVWRQLKTLGHLILHSLRLLRERLCLLGGIIQYWGKELKISAISLLDATAIAVAEGTDRIIEAFQVTLRIIRNIPRRIRQGLERALL.

Positions methionine 1 to serine 31 are cleaved as a signal peptide. The Extracellular segment spans residues glutamate 32–isoleucine 675. Disulfide bonds link cysteine 53/cysteine 73, cysteine 118/cysteine 203, cysteine 125/cysteine 194, cysteine 130/cysteine 155, cysteine 216/cysteine 245, and cysteine 226/cysteine 237. The tract at residues cysteine 130–asparagine 154 is V1. 7 N-linked (GlcNAc...) asparagine; by host glycosylation sites follow: asparagine 134, asparagine 140, asparagine 143, asparagine 154, asparagine 158, asparagine 186, and asparagine 195. The segment at cysteine 155–cysteine 194 is V2. N-linked (GlcNAc...) asparagine; by host glycans are attached at residues asparagine 239, asparagine 260, asparagine 267, asparagine 274, asparagine 299, asparagine 331, asparagine 336, asparagine 351, and asparagine 356. Residues cysteine 294–tyrosine 327 are V3. Residues cysteine 294 and cysteine 328 are joined by a disulfide bond. The segment at alanine 362–histidine 372 is CD4-binding loop. 2 cysteine pairs are disulfide-bonded: cysteine 376/cysteine 429 and cysteine 383/cysteine 402. The V4 stretch occupies residues cysteine 383–cysteine 402. Asparagine 384, asparagine 392, asparagine 426, asparagine 432, asparagine 446, and asparagine 450 each carry an N-linked (GlcNAc...) asparagine; by host glycan. V5 regions lie at residues threonine 445–threonine 456 and asparagine 447–threonine 456. The segment at alanine 501–alanine 522 is fusion peptide. The segment at lysine 564–isoleucine 582 is immunosuppression. Cysteine 588 and cysteine 594 form a disulfide bridge. N-linked (GlcNAc...) asparagine; by host glycans are attached at residues asparagine 601, asparagine 608, asparagine 616, and asparagine 628. Positions lysine 624 to alanine 658 form a coiled coil. The MPER; binding to GalCer stretch occupies residues glutamate 653–lysine 674. Residues phenylalanine 676–valine 696 form a helical membrane-spanning segment. Topologically, residues arginine 697–leucine 854 are cytoplasmic. A YXXL motif; contains endocytosis signal motif is present at residues tyrosine 703–leucine 706. A Di-leucine internalization motif motif is present at residues leucine 853–leucine 854.

This sequence belongs to the HIV-1 env protein family. As to quaternary structure, the mature envelope protein (Env) consists of a homotrimer of non-covalently associated gp120-gp41 heterodimers. The resulting complex protrudes from the virus surface as a spike. There seems to be as few as 10 spikes on the average virion. Interacts with host CD4, CCR5 and CXCR4. Gp120 also interacts with the C-type lectins CD209/DC-SIGN and CLEC4M/DC-SIGNR (collectively referred to as DC-SIGN(R)). Gp120 and gp41 interact with GalCer. Gp120 interacts with host ITGA4/ITGB7 complex; on CD4+ T-cells, this interaction results in rapid activation of integrin ITGAL/LFA-1, which facilitates efficient cell-to-cell spreading of HIV-1. Gp120 interacts with cell-associated heparan sulfate; this interaction increases virus infectivity on permissive cells and may be involved in infection of CD4- cells. In terms of assembly, the mature envelope protein (Env) consists of a homotrimer of non-covalently associated gp120-gp41 heterodimers. The resulting complex protrudes from the virus surface as a spike. There seems to be as few as 10 spikes on the average virion. Post-translationally, highly glycosylated by host. The high number of glycan on the protein is reffered to as 'glycan shield' because it contributes to hide protein sequence from adaptive immune system. Palmitoylation of the transmembrane protein and of Env polyprotein (prior to its proteolytic cleavage) is essential for their association with host cell membrane lipid rafts. Palmitoylation is therefore required for envelope trafficking to classical lipid rafts, but not for viral replication. In terms of processing, specific enzymatic cleavages in vivo yield mature proteins. Envelope glycoproteins are synthesized as an inactive precursor that is heavily N-glycosylated and processed likely by host cell furin in the Golgi to yield the mature SU and TM proteins. The cleavage site between SU and TM requires the minimal sequence [KR]-X-[KR]-R. About 2 of the 9 disulfide bonds of gp41 are reduced by P4HB/PDI, following binding to CD4 receptor.

It is found in the virion membrane. Its subcellular location is the host cell membrane. It localises to the host endosome membrane. In terms of biological role, attaches the virus to the host lymphoid cell by binding to the primary receptor CD4. This interaction induces a structural rearrangement creating a high affinity binding site for a chemokine coreceptor like CXCR4 and/or CCR5. Acts as a ligand for CD209/DC-SIGN and CLEC4M/DC-SIGNR, which are respectively found on dendritic cells (DCs), and on endothelial cells of liver sinusoids and lymph node sinuses. These interactions allow capture of viral particles at mucosal surfaces by these cells and subsequent transmission to permissive cells. HIV subverts the migration properties of dendritic cells to gain access to CD4+ T-cells in lymph nodes. Virus transmission to permissive T-cells occurs either in trans (without DCs infection, through viral capture and transmission), or in cis (following DCs productive infection, through the usual CD4-gp120 interaction), thereby inducing a robust infection. In trans infection, bound virions remain infectious over days and it is proposed that they are not degraded, but protected in non-lysosomal acidic organelles within the DCs close to the cell membrane thus contributing to the viral infectious potential during DCs' migration from the periphery to the lymphoid tissues. On arrival at lymphoid tissues, intact virions recycle back to DCs' cell surface allowing virus transmission to CD4+ T-cells. Its function is as follows. Acts as a class I viral fusion protein. Under the current model, the protein has at least 3 conformational states: pre-fusion native state, pre-hairpin intermediate state, and post-fusion hairpin state. During fusion of viral and target intracellular membranes, the coiled coil regions (heptad repeats) assume a trimer-of-hairpins structure, positioning the fusion peptide in close proximity to the C-terminal region of the ectodomain. The formation of this structure appears to drive apposition and subsequent fusion of viral and target cell membranes. Complete fusion occurs in host cell endosomes and is dynamin-dependent, however some lipid transfer might occur at the plasma membrane. The virus undergoes clathrin-dependent internalization long before endosomal fusion, thus minimizing the surface exposure of conserved viral epitopes during fusion and reducing the efficacy of inhibitors targeting these epitopes. Membranes fusion leads to delivery of the nucleocapsid into the cytoplasm. Functionally, oligomerizes in the host endoplasmic reticulum into predominantly trimers. In a second time, gp160 transits in the host Golgi, where glycosylation is completed. The precursor is then proteolytically cleaved in the trans-Golgi and thereby activated by cellular furin or furin-like proteases to produce gp120 and gp41. This Pan (chimpanzees) protein is Envelope glycoprotein gp160.